The sequence spans 171 residues: UPF0763 protein HPSH_03535 (171 aa).

Belongs to the UPF0763 family.

This Helicobacter pylori (strain Shi470) protein is UPF0763 protein HPSH_03535.